The chain runs to 297 residues: Putative heme-binding peroxidase (297 aa).

His74 functions as the Proton acceptor in the catalytic mechanism. Heme b is bound at residue His198. Trp214 serves as the catalytic Tryptophan radical intermediate.

The protein belongs to the peroxidase family. Cytochrome c peroxidase subfamily. Heme b serves as cofactor.

Functionally, destroys radicals which are normally produced within the cells and which are toxic to biological systems. This chain is Putative heme-binding peroxidase, found in Yarrowia lipolytica (strain CLIB 122 / E 150) (Yeast).